The chain runs to 475 residues: Methylenomycin A resistance protein (475 aa).

The next 14 helical transmembrane spans lie at 28-48 (ITALATGFVMATLDVTVVNVA), 65-85 (WIVDGYVLTFASLLMLAGGLA), 93-113 (VYLWGMGVFFLASLACALAPT), 123-143 (VQGAGAALFMPSSLSLLVFSF), 152-172 (MLGLWSAIVATSSGLGPTVGG), 173-193 (LMVSAFGWESIFLLNLPIGAI), 212-232 (LAVPGHLLWIVALAAVSFALI), 240-260 (TAGPVLTAYAVAVTAAALLAL), 285-305 (LVGFLFNFALFGSTFMLGLYF), 314-334 (FQAGLELLPMTIFFPVANIVY), 346-366 (LLTAFLLLAGAASLSMVTITA), 371-391 (WVVAVAVGVANIGAGIISPGM), 416-436 (QIGSLVGIAAMGVVLHSTSDW), and 439-459 (GAAISFLAVGLAYLLGGLSAW).

The protein belongs to the major facilitator superfamily.

It localises to the cell membrane. Resistance to the epoxide antibiotic methylenomycin A; probably by mediating its efflux. This chain is Methylenomycin A resistance protein (mmr), found in Streptomyces coelicolor (strain ATCC BAA-471 / A3(2) / M145).